Consider the following 284-residue polypeptide: NAD kinase (284 aa).

Asp70 functions as the Proton acceptor in the catalytic mechanism. NAD(+)-binding positions include 70–71 (DG), 139–140 (NE), Lys167, Asp169, Leu177, 180–185 (TAYNLS), and Gln236.

The protein belongs to the NAD kinase family. The cofactor is a divalent metal cation.

It localises to the cytoplasm. The enzyme catalyses NAD(+) + ATP = ADP + NADP(+) + H(+). In terms of biological role, involved in the regulation of the intracellular balance of NAD and NADP, and is a key enzyme in the biosynthesis of NADP. Catalyzes specifically the phosphorylation on 2'-hydroxyl of the adenosine moiety of NAD to yield NADP. The polypeptide is NAD kinase (Helicobacter pylori (strain G27)).